Reading from the N-terminus, the 494-residue chain is MLELPIISITIFLPLISVLYILLFINQSKKANKLNIYVAMVAMLSSVLTFILTIYILIEFDASNHTYQFVERYTWLDKIGLEFHVGIDGIAIFFVVLTSFLTLICIIGSIFTIKKYIKEYLVCFLLMESFCIGAFTAVNLLLFYLFFEAILVPMYIIIGVWGGDNRIYAALKFFLYTFFGSVFFLLALIYIYSKIHSFDLTYILALTENIPLFAQKILWWTIFIAFAVKIPMIPFHTWLPDAHVQAPTSGSVILAGILLKLGSYGFLRVLLPLLPNVSQEFAIYVIYLSVIAIIYSSLVALAQKDIKQMIAYSSIAHMGYVTIGIFSFTETGISGAIFQMLSHGVVSSSLFLIVGTLYERLHTKEIAKYGGVASKMPVLATFFMITMLSSIGLPSTSGFIGEFLSLLGIYKVNVVAACIAALGIILGAVYMLKLYKEVMLGEITNTEIKHFKDLYRYEILSIAPLILIIIYFGLMPNSILNVFHLSVENLLIKF.

The next 14 helical transmembrane spans lie at 5-25, 36-58, 90-110, 119-139, 140-160, 173-193, 206-226, 252-272, 281-301, 318-338, 339-359, 376-396, 412-432, and 459-479; these read PIISITIFLPLISVLYILLFI, IYVAMVAMLSSVLTFILTIYILI, IAIFFVVLTSFLTLICIIGSI, EYLVCFLLMESFCIGAFTAVN, LLLFYLFFEAILVPMYIIIGV, FFLYTFFGSVFFLLALIYIYS, LTENIPLFAQKILWWTIFIAF, VILAGILLKLGSYGFLRVLLP, FAIYVIYLSVIAIIYSSLVAL, MGYVTIGIFSFTETGISGAIF, QMLSHGVVSSSLFLIVGTLYE, MPVLATFFMITMLSSIGLPST, VNVVAACIAALGIILGAVYML, and ILSIAPLILIIIYFGLMPNSI.

The protein belongs to the complex I subunit 4 family.

The protein resides in the cell membrane. It catalyses the reaction a quinone + NADH + 5 H(+)(in) = a quinol + NAD(+) + 4 H(+)(out). In terms of biological role, NDH-1 shuttles electrons from NADH, via FMN and iron-sulfur (Fe-S) centers, to quinones in the respiratory chain. Couples the redox reaction to proton translocation (for every two electrons transferred, four hydrogen ions are translocated across the cytoplasmic membrane), and thus conserves the redox energy in a proton gradient. This is NADH-quinone oxidoreductase subunit M (nuoM) from Rickettsia typhi (strain ATCC VR-144 / Wilmington).